Reading from the N-terminus, the 384-residue chain is MGTAPNKRVMIVAGEASGDLHGSNLVKEALRLDPTLSFFGIGGPHMRAAGVETVVDSSEMAVVGLVEVLAHFGVIYKAYATLKRLITTNPPDLLILIDYPDFNMLVAKVAKRAGVKVLYYISPQVWAWRTGRVKKIARLVDRMAVVFPFEVPFYEKAGVPVSFVGHPLADRVSPSMSRSEALAAFGLDPSRRVVGLFPGSRRGEIARLFPVILESAKLLRDRYPGIQFILPLASSLTDADIAPHLAASGLEVVVARDKVYDVMQVCDAIATVSGTVTLEIALMGVPMVIIYTVSPLTYEVGKRLIRVDHIGICNIVAGERVVPELIQDEATAERIAAEIGRYLDDPVHTEKTRAGLARVREKLGSGGCSERVAGIVLEMLGKKR.

This sequence belongs to the LpxB family.

The enzyme catalyses a lipid X + a UDP-2-N,3-O-bis[(3R)-3-hydroxyacyl]-alpha-D-glucosamine = a lipid A disaccharide + UDP + H(+). The protein operates within bacterial outer membrane biogenesis; LPS lipid A biosynthesis. Functionally, condensation of UDP-2,3-diacylglucosamine and 2,3-diacylglucosamine-1-phosphate to form lipid A disaccharide, a precursor of lipid A, a phosphorylated glycolipid that anchors the lipopolysaccharide to the outer membrane of the cell. The protein is Lipid-A-disaccharide synthase of Geobacter metallireducens (strain ATCC 53774 / DSM 7210 / GS-15).